The following is a 356-amino-acid chain: Guanine nucleotide-binding protein alpha-3 subunit (356 aa).

Residues Met-1–Glu-26 form a disordered region. Gly-2 carries the N-myristoyl glycine lipid modification. Residue Cys-4 is the site of S-palmitoyl cysteine attachment. A compositionally biased stretch (basic and acidic residues) spans Lys-7–Arg-23. Residues Lys-34–Leu-356 form the G-alpha domain. Positions Lys-37–Thr-50 are G1 motif. Residues Gly-42 to Ser-49, Leu-179 to Thr-185, Asp-204 to Gln-208, Asn-273 to Asp-276, and Ala-328 contribute to the GTP site. Mg(2+)-binding residues include Ser-49 and Thr-185. The G2 motif stretch occupies residues Asp-177–Thr-185. Positions Ile-200–Arg-209 are G3 motif. The interval Ile-269–Asp-276 is G4 motif. The G5 motif stretch occupies residues Thr-326–Thr-331.

Belongs to the G-alpha family. G(q) subfamily. G proteins are composed of 3 units; alpha, beta and gamma. The alpha chain contains the guanine nucleotide binding site.

Guanine nucleotide-binding proteins (G proteins) are involved as modulators or transducers in various transmembrane signaling systems. Involved in conidiation. This is Guanine nucleotide-binding protein alpha-3 subunit (gna-3) from Neurospora crassa (strain ATCC 24698 / 74-OR23-1A / CBS 708.71 / DSM 1257 / FGSC 987).